A 154-amino-acid polypeptide reads, in one-letter code: Pseudo histidine-containing phosphotransfer protein 6 (154 aa).

M1 bears the N-acetylmethionine mark. The HPt domain maps to 41-137 (SPNFVYDVIN…HYLKNMMHEL (97 aa)).

As to quaternary structure, interacts with AHK5.

It localises to the cytoplasm. It is found in the cytosol. Its subcellular location is the nucleus. In terms of biological role, functions as a two-component phosphorelay mediator between cytokinin sensor histidine kinases and response regulators (B-type ARRs). Plays an important role in propagating cytokinin signal transduction. This is Pseudo histidine-containing phosphotransfer protein 6 (AHP6) from Arabidopsis thaliana (Mouse-ear cress).